Consider the following 169-residue polypeptide: Cytochrome c oxidase subunit 4 isoform 1, mitochondrial (169 aa).

A mitochondrion-targeting transit peptide spans 1-22 (MLATRALSLIGKRAISTSVCLR). Residues 23–98 (AHGSVVKSED…SFAEMNKGTN (76 aa)) lie on the Mitochondrial matrix side of the membrane. Residue Lys29 is modified to N6-acetyllysine; alternate. Lys29 carries the post-translational modification N6-succinyllysine; alternate. Lys53 bears the N6-acetyllysine mark. Ser56 and Ser58 each carry phosphoserine. Lys60 is subject to N6-acetyllysine; alternate. N6-succinyllysine; alternate is present on Lys60. Lys67 is modified (N6-acetyllysine). Residues 99–124 (EWKTVVGLAMFFIGFTALVLIWEKSY) form a helical membrane-spanning segment. Over 125–169 (VYGPIPHTFDRDWVAMQTKRMLDMKVNPIQGFSAKWDYNKNEWKK) the chain is Mitochondrial intermembrane.

It belongs to the cytochrome c oxidase IV family. In terms of assembly, component of the cytochrome c oxidase (complex IV, CIV), a multisubunit enzyme composed of 14 subunits. The complex is composed of a catalytic core of 3 subunits MT-CO1, MT-CO2 and MT-CO3, encoded in the mitochondrial DNA, and 11 supernumerary subunits COX4I, COX5A, COX5B, COX6A, COX6B, COX6C, COX7A, COX7B, COX7C, COX8 and NDUFA4, which are encoded in the nuclear genome. The complex exists as a monomer or a dimer and forms supercomplexes (SCs) in the inner mitochondrial membrane with NADH-ubiquinone oxidoreductase (complex I, CI) and ubiquinol-cytochrome c oxidoreductase (cytochrome b-c1 complex, complex III, CIII), resulting in different assemblies (supercomplex SCI(1)III(2)IV(1) and megacomplex MCI(2)III(2)IV(2)). Interacts with PHB2; the interaction decreases in absence of SPHK2. Interacts with AFG1L. Interacts with ABCB7; this interaction allows the regulation of cellular iron homeostasis and cellular reactive oxygen species (ROS) levels in cardiomyocytes. Interacts with FLVCR2; this interaction occurs in the absence of heme and is disrupted upon heme binding. Interacts with IRGC.

Its subcellular location is the mitochondrion inner membrane. Its pathway is energy metabolism; oxidative phosphorylation. Component of the cytochrome c oxidase, the last enzyme in the mitochondrial electron transport chain which drives oxidative phosphorylation. The respiratory chain contains 3 multisubunit complexes succinate dehydrogenase (complex II, CII), ubiquinol-cytochrome c oxidoreductase (cytochrome b-c1 complex, complex III, CIII) and cytochrome c oxidase (complex IV, CIV), that cooperate to transfer electrons derived from NADH and succinate to molecular oxygen, creating an electrochemical gradient over the inner membrane that drives transmembrane transport and the ATP synthase. Cytochrome c oxidase is the component of the respiratory chain that catalyzes the reduction of oxygen to water. Electrons originating from reduced cytochrome c in the intermembrane space (IMS) are transferred via the dinuclear copper A center (CU(A)) of subunit 2 and heme A of subunit 1 to the active site in subunit 1, a binuclear center (BNC) formed by heme A3 and copper B (CU(B)). The BNC reduces molecular oxygen to 2 water molecules using 4 electrons from cytochrome c in the IMS and 4 protons from the mitochondrial matrix. The sequence is that of Cytochrome c oxidase subunit 4 isoform 1, mitochondrial (Cox4i1) from Rattus norvegicus (Rat).